A 252-amino-acid polypeptide reads, in one-letter code: Pyrroloquinoline-quinone synthase (252 aa).

It belongs to the PqqC family.

The catalysed reaction is 6-(2-amino-2-carboxyethyl)-7,8-dioxo-1,2,3,4,7,8-hexahydroquinoline-2,4-dicarboxylate + 3 O2 = pyrroloquinoline quinone + 2 H2O2 + 2 H2O + H(+). It functions in the pathway cofactor biosynthesis; pyrroloquinoline quinone biosynthesis. In terms of biological role, ring cyclization and eight-electron oxidation of 3a-(2-amino-2-carboxyethyl)-4,5-dioxo-4,5,6,7,8,9-hexahydroquinoline-7,9-dicarboxylic-acid to PQQ. The protein is Pyrroloquinoline-quinone synthase of Acinetobacter baumannii (strain ACICU).